The chain runs to 673 residues: UPF0313 protein blr7973 (673 aa).

The 280-residue stretch at 332 to 611 folds into the Radical SAM core domain; that stretch reads AWDMIKFSVT…KAFLRYHDPD (280 aa). [4Fe-4S] cluster is bound by residues C346, C350, and C353. The interval 632-673 is disordered; sequence RPDQLVPAHQPPGTGKAAGTRRPVRPGGKTQRFTTKGLRVMK.

This sequence belongs to the UPF0313 family. [4Fe-4S] cluster is required as a cofactor.

The polypeptide is UPF0313 protein blr7973 (Bradyrhizobium diazoefficiens (strain JCM 10833 / BCRC 13528 / IAM 13628 / NBRC 14792 / USDA 110)).